Reading from the N-terminus, the 406-residue chain is Multifunctional CCA protein (406 aa).

Positions 8 and 11 each coordinate ATP. 2 residues coordinate CTP: glycine 8 and arginine 11. Residues glutamate 21 and aspartate 23 each contribute to the Mg(2+) site. ATP contacts are provided by arginine 91, arginine 137, and arginine 140. Arginine 91, arginine 137, and arginine 140 together coordinate CTP. Residues 225 to 326 form the HD domain; that stretch reads TGIHTLKVLE…LKLLNRVDAF (102 aa).

It belongs to the tRNA nucleotidyltransferase/poly(A) polymerase family. Bacterial CCA-adding enzyme type 1 subfamily. As to quaternary structure, monomer. Can also form homodimers and oligomers. It depends on Mg(2+) as a cofactor. Requires Ni(2+) as cofactor.

The enzyme catalyses a tRNA precursor + 2 CTP + ATP = a tRNA with a 3' CCA end + 3 diphosphate. The catalysed reaction is a tRNA with a 3' CCA end + 2 CTP + ATP = a tRNA with a 3' CCACCA end + 3 diphosphate. In terms of biological role, catalyzes the addition and repair of the essential 3'-terminal CCA sequence in tRNAs without using a nucleic acid template. Adds these three nucleotides in the order of C, C, and A to the tRNA nucleotide-73, using CTP and ATP as substrates and producing inorganic pyrophosphate. tRNA 3'-terminal CCA addition is required both for tRNA processing and repair. Also involved in tRNA surveillance by mediating tandem CCA addition to generate a CCACCA at the 3' terminus of unstable tRNAs. While stable tRNAs receive only 3'-terminal CCA, unstable tRNAs are marked with CCACCA and rapidly degraded. The sequence is that of Multifunctional CCA protein from Nitrosococcus oceani (strain ATCC 19707 / BCRC 17464 / JCM 30415 / NCIMB 11848 / C-107).